The sequence spans 360 residues: Phospho-N-acetylmuramoyl-pentapeptide-transferase (360 aa).

Residues 1-25 are Periplasmic-facing; the sequence is MLVWLAEHLVKYYSGFNVFSYLTFR. A helical membrane pass occupies residues 26–46; it reads AIVSLLTALFISLWMGPRMIA. Topologically, residues 47–71 are cytoplasmic; that stretch reads HLQKLSFGQVVRNDGPESHFSKRGT. A helical transmembrane segment spans residues 72 to 92; that stretch reads PTMGGIMILTAIVISVLLWAY. Residue Pro-93 is a topological domain, periplasmic. Residues 94–114 form a helical membrane-spanning segment; that stretch reads SNPYVWCVLVVLVGYGVIGFV. The Cytoplasmic portion of the chain corresponds to 115–131; that stretch reads DDYRKVVRKDTKGLIAR. Residues 132-152 traverse the membrane as a helical segment; sequence WKYFWMSVIALGVAFALYLVG. At 153 to 167 the chain is on the periplasmic side; the sequence is KDTPATQLVVPFFKD. A helical transmembrane segment spans residues 168–188; that stretch reads VMPQLGLFYILLAYFVIVGTG. Over 189–198 the chain is Cytoplasmic; that stretch reads NAVNLTDGLD. A helical transmembrane segment spans residues 199–219; sequence GLAIMPTVFVAGGFALVAWAT. The Periplasmic segment spans residues 220–235; the sequence is GNMNFASYLHIPYLRH. Residues 236–256 form a helical membrane-spanning segment; sequence AGELVIVCTAIVGAGLGFLWF. Residues 257–262 are Cytoplasmic-facing; it reads NTYPAQ. Residues 263-283 form a helical membrane-spanning segment; that stretch reads VFMGDVGSLALGGALGIIAVL. Over 284–287 the chain is Periplasmic; sequence LRQE. The chain crosses the membrane as a helical span at residues 288–308; it reads FLLVIMGGVFVVETLSVILQV. Over 309-337 the chain is Cytoplasmic; it reads GSFKLRGQRIFRMAPIHHHYELKGWPEPR. A helical transmembrane segment spans residues 338-358; that stretch reads VIVRFWIISLMLVLIGLATLK. Residues 359 to 360 are Periplasmic-facing; sequence VR.

It belongs to the glycosyltransferase 4 family. MraY subfamily. Mg(2+) serves as cofactor.

The protein localises to the cell inner membrane. The catalysed reaction is UDP-N-acetyl-alpha-D-muramoyl-L-alanyl-gamma-D-glutamyl-meso-2,6-diaminopimeloyl-D-alanyl-D-alanine + di-trans,octa-cis-undecaprenyl phosphate = di-trans,octa-cis-undecaprenyl diphospho-N-acetyl-alpha-D-muramoyl-L-alanyl-D-glutamyl-meso-2,6-diaminopimeloyl-D-alanyl-D-alanine + UMP. It participates in cell wall biogenesis; peptidoglycan biosynthesis. Functionally, catalyzes the initial step of the lipid cycle reactions in the biosynthesis of the cell wall peptidoglycan: transfers peptidoglycan precursor phospho-MurNAc-pentapeptide from UDP-MurNAc-pentapeptide onto the lipid carrier undecaprenyl phosphate, yielding undecaprenyl-pyrophosphoryl-MurNAc-pentapeptide, known as lipid I. The polypeptide is Phospho-N-acetylmuramoyl-pentapeptide-transferase (Escherichia coli O157:H7).